The primary structure comprises 511 residues: Cobyric acid synthase (511 aa).

The GATase cobBQ-type domain occupies 251-443 (LLDIAIICLP…IHGIFDNDIF (193 aa)). The active-site Nucleophile is the C332. H435 is an active-site residue.

The protein belongs to the CobB/CobQ family. CobQ subfamily.

The protein operates within cofactor biosynthesis; adenosylcobalamin biosynthesis. Catalyzes amidations at positions B, D, E, and G on adenosylcobyrinic A,C-diamide. NH(2) groups are provided by glutamine, and one molecule of ATP is hydrogenolyzed for each amidation. The chain is Cobyric acid synthase from Listeria innocua serovar 6a (strain ATCC BAA-680 / CLIP 11262).